The sequence spans 277 residues: Large ribosomal subunit protein uL2 (277 aa).

Positions 222–259 are disordered; sequence GSVMNPNDHPHGGGEGKSPVGRPSPVTPWGKPALGYKT.

The protein belongs to the universal ribosomal protein uL2 family. In terms of assembly, part of the 50S ribosomal subunit. Forms a bridge to the 30S subunit in the 70S ribosome.

In terms of biological role, one of the primary rRNA binding proteins. Required for association of the 30S and 50S subunits to form the 70S ribosome, for tRNA binding and peptide bond formation. It has been suggested to have peptidyltransferase activity; this is somewhat controversial. Makes several contacts with the 16S rRNA in the 70S ribosome. The protein is Large ribosomal subunit protein uL2 of Clostridium beijerinckii (strain ATCC 51743 / NCIMB 8052) (Clostridium acetobutylicum).